The sequence spans 689 residues: Glycine--tRNA ligase beta subunit (689 aa).

It belongs to the class-II aminoacyl-tRNA synthetase family. In terms of assembly, tetramer of two alpha and two beta subunits.

It is found in the cytoplasm. It catalyses the reaction tRNA(Gly) + glycine + ATP = glycyl-tRNA(Gly) + AMP + diphosphate. In Shewanella baltica (strain OS155 / ATCC BAA-1091), this protein is Glycine--tRNA ligase beta subunit.